The primary structure comprises 390 residues: Protein YghO (390 aa).

In Escherichia coli (strain K12), this protein is Protein YghO (yghO).